The following is a 257-amino-acid chain: RNA polymerase sigma-B factor (257 aa).

The Polymerase core binding motif lies at 58–71 (DIIQVGMLGLLGAI). The segment at residues 224–243 (QKDTGERLGISQMHVSRIKR) is a DNA-binding region (H-T-H motif).

Belongs to the sigma-70 factor family. SigB subfamily.

Sigma factors are initiation factors that promote the attachment of RNA polymerase to specific initiation sites and are then released. The protein is RNA polymerase sigma-B factor (sigB) of Bacillus anthracis.